The primary structure comprises 378 residues: Chaperone protein DnaJ (378 aa).

The 66-residue stretch at 5–70 folds into the J domain; that stretch reads DYYEVLGVAK…QKRAAYDQYG (66 aa). A CR-type zinc finger spans residues 138 to 216; the sequence is GYDTQIRVPS…CHGSGKVKET (79 aa). Zn(2+)-binding residues include Cys-151, Cys-154, Cys-168, Cys-171, Cys-190, Cys-193, Cys-204, and Cys-207. CXXCXGXG motif repeat units lie at residues 151-158, 168-175, 190-197, and 204-211; these read CEVCHGSG, CPTCHGQG, CPKCHGTG, and CAHCHGSG.

The protein belongs to the DnaJ family. Homodimer. It depends on Zn(2+) as a cofactor.

Its subcellular location is the cytoplasm. Participates actively in the response to hyperosmotic and heat shock by preventing the aggregation of stress-denatured proteins and by disaggregating proteins, also in an autonomous, DnaK-independent fashion. Unfolded proteins bind initially to DnaJ; upon interaction with the DnaJ-bound protein, DnaK hydrolyzes its bound ATP, resulting in the formation of a stable complex. GrpE releases ADP from DnaK; ATP binding to DnaK triggers the release of the substrate protein, thus completing the reaction cycle. Several rounds of ATP-dependent interactions between DnaJ, DnaK and GrpE are required for fully efficient folding. Also involved, together with DnaK and GrpE, in the DNA replication of plasmids through activation of initiation proteins. This is Chaperone protein DnaJ from Burkholderia cenocepacia (strain HI2424).